Here is a 253-residue protein sequence, read N- to C-terminus: ABC transporter D-alanine-binding periplasmic protein (253 aa).

Residues 1–22 form the signal peptide; sequence MLSKKFGLSMIVLGIMSSSAFA. D-alanine contacts are provided by G95, S97, R102, A147, and E191.

Belongs to the bacterial solute-binding protein 3 family. As to quaternary structure, monomer.

It localises to the periplasm. In terms of biological role, part of the ABC transporter complex dalSTUV, that imports D-alanine into the cytoplasm. Helps protect the organism from oxidative killing by host neutrophils through sequestration of D-alanine, a substrate that is converted to hydrogen peroxide by the host enzyme DAO (D-amino acid oxidase). DalS shuttles D-alanine from the periplasm to the DalTUV complex situated in the inner membrane and through hydrolysis of ATP, D-alanine is transported across the membrane into the cytoplasm. Not required for the metabolism of D-alanine found in the stem peptide of peptidoglycan. This is ABC transporter D-alanine-binding periplasmic protein from Salmonella typhimurium (strain LT2 / SGSC1412 / ATCC 700720).